Here is a 123-residue protein sequence, read N- to C-terminus: UPF0295 protein Bcer98_0460 (123 aa).

The next 2 membrane-spanning stretches (helical) occupy residues 12–32 (IRTF…LGVF) and 43–63 (FMML…WIGM).

The protein belongs to the UPF0295 family.

It localises to the cell membrane. This is UPF0295 protein Bcer98_0460 from Bacillus cytotoxicus (strain DSM 22905 / CIP 110041 / 391-98 / NVH 391-98).